The chain runs to 226 residues: Spermatogenesis-associated protein 25 (226 aa).

A helical transmembrane segment spans residues 153-173 (ICILTLAMMIAGIPTVPVPGL).

Belongs to the SPATA25 family. Expressed strongly in testis, weakly in epididymis and not detected in other tissues.

It localises to the membrane. In terms of biological role, may play a role in spermatogenesis. The protein is Spermatogenesis-associated protein 25 (Spata25) of Mus musculus (Mouse).